A 499-amino-acid chain; its full sequence is Glutamate--tRNA ligase (499 aa).

Residues 12 to 22 (PSPTGHLHIGN) carry the 'HIGH' region motif. Residues 259-263 (KLSKR) carry the 'KMSKS' region motif. ATP is bound at residue Lys-262.

Belongs to the class-I aminoacyl-tRNA synthetase family. Glutamate--tRNA ligase type 1 subfamily. As to quaternary structure, monomer.

It is found in the cytoplasm. The catalysed reaction is tRNA(Glu) + L-glutamate + ATP = L-glutamyl-tRNA(Glu) + AMP + diphosphate. In terms of biological role, catalyzes the attachment of glutamate to tRNA(Glu) in a two-step reaction: glutamate is first activated by ATP to form Glu-AMP and then transferred to the acceptor end of tRNA(Glu). This chain is Glutamate--tRNA ligase, found in Lactobacillus acidophilus (strain ATCC 700396 / NCK56 / N2 / NCFM).